The chain runs to 318 residues: NAD kinase (318 aa).

The active-site Proton acceptor is Asp80. NAD(+) is bound by residues 80–81 (DG), Arg85, 155–156 (NE), Asp185, and 196–201 (TAYAFS).

It belongs to the NAD kinase family. A divalent metal cation is required as a cofactor.

The protein localises to the cytoplasm. The catalysed reaction is NAD(+) + ATP = ADP + NADP(+) + H(+). Its function is as follows. Involved in the regulation of the intracellular balance of NAD and NADP, and is a key enzyme in the biosynthesis of NADP. Catalyzes specifically the phosphorylation on 2'-hydroxyl of the adenosine moiety of NAD to yield NADP. The sequence is that of NAD kinase from Corynebacterium efficiens (strain DSM 44549 / YS-314 / AJ 12310 / JCM 11189 / NBRC 100395).